The chain runs to 151 residues: Ribosome maturation factor RimP (151 aa).

The protein belongs to the RimP family.

The protein localises to the cytoplasm. In terms of biological role, required for maturation of 30S ribosomal subunits. This Pasteurella multocida (strain Pm70) protein is Ribosome maturation factor RimP.